Reading from the N-terminus, the 90-residue chain is DNA-directed RNA polymerase subunit omega (90 aa).

Residues 70–90 are disordered; sequence QEQQEQEAAELAAVSSIMHNR.

It belongs to the RNA polymerase subunit omega family. In terms of assembly, the RNAP catalytic core consists of 2 alpha, 1 beta, 1 beta' and 1 omega subunit. When a sigma factor is associated with the core the holoenzyme is formed, which can initiate transcription.

It catalyses the reaction RNA(n) + a ribonucleoside 5'-triphosphate = RNA(n+1) + diphosphate. Promotes RNA polymerase assembly. Latches the N- and C-terminal regions of the beta' subunit thereby facilitating its interaction with the beta and alpha subunits. The chain is DNA-directed RNA polymerase subunit omega from Vibrio cholerae serotype O1 (strain ATCC 39541 / Classical Ogawa 395 / O395).